The chain runs to 106 residues: uncharacterized protein (106 aa).

This is an uncharacterized protein from Rickettsia prowazekii (strain Madrid E).